The chain runs to 210 residues: Ribosomal RNA large subunit methyltransferase E (210 aa).

S-adenosyl-L-methionine is bound by residues G64, W66, D84, N100, and D125. The Proton acceptor role is filled by K165.

The protein belongs to the class I-like SAM-binding methyltransferase superfamily. RNA methyltransferase RlmE family.

Its subcellular location is the cytoplasm. It catalyses the reaction uridine(2552) in 23S rRNA + S-adenosyl-L-methionine = 2'-O-methyluridine(2552) in 23S rRNA + S-adenosyl-L-homocysteine + H(+). Functionally, specifically methylates the uridine in position 2552 of 23S rRNA at the 2'-O position of the ribose in the fully assembled 50S ribosomal subunit. The sequence is that of Ribosomal RNA large subunit methyltransferase E from Buchnera aphidicola subsp. Baizongia pistaciae (strain Bp).